We begin with the raw amino-acid sequence, 971 residues long: Dynamin-like GTPase OPA1, mitochondrial (971 aa).

The transit peptide at 1 to 89 directs the protein to the mitochondrion; it reads MLRVGRAVAC…GGWRYQQHRS (89 aa). Topologically, residues 90–98 are mitochondrial matrix; sequence FWMLRLASR. The chain crosses the membrane as a helical span at residues 99–115; it reads LLKLRYIVLGSAVGGGY. The Mitochondrial intermembrane portion of the chain corresponds to 116 to 781; sequence TAKKTYEEWK…SVINDMVGPD (666 aa). The disordered stretch occupies residues 204–224; it reads EAPVTATPEASDKQFKKSSDK. Positions 213 to 224 are enriched in basic and acidic residues; the sequence is ASDKQFKKSSDK. A coiled-coil region spans residues 219-265; that stretch reads KKSSDKEKVDQLQEELLRTQMKYQRMLERLEKENKDLRKVVLQKDEK. The Dynamin-type G domain occupies 297 to 572; it reads QDHLPRVVVV…FWKMVRESVE (276 aa). The interval 307-314 is G1 motif; sequence GDQSAGKT. The GTP site is built by Ser-310, Gly-312, Lys-313, Thr-314, Ser-315, and Gly-329. Residue Thr-314 coordinates Mg(2+). Residues 333–336 are G2 motif; it reads MMTR. 2 residues coordinate Mg(2+): Thr-335 and Asp-410. Residues 410 to 413 are G3 motif; it reads DLPG. Residues 478-481 form a G4 motif region; it reads TKVD. The GTP site is built by Lys-479, Asp-481, and Thr-514. The G5 motif stretch occupies residues 512–515; the sequence is VVTG. 2 stalk region regions span residues 600–847 and 885–939; these read DRNE…IKDT and CNDV…VHLI. Positions 747–867 are paddle region; it reads TDKPQWDAAI…QKALQHCNLC (121 aa). The stretch at 782–792 is an intramembrane region; it reads WKQRWMSWKNR. At 793–971 the chain is on the mitochondrial intermembrane side; that stretch reads SPEQHTRNET…AFIEALHKEK (179 aa). A disulfide bond links Cys-867 and Cys-885. The stretch at 906-971 forms a coiled coil; sequence RQQLTNTEVR…AFIEALHKEK (66 aa).

The protein belongs to the TRAFAC class dynamin-like GTPase superfamily. Dynamin/Fzo/YdjA family. In terms of assembly, oligomeric complex consisting of membrane-bound and soluble forms of OPA1. In terms of processing, cleaved by OMA1 or YME1L downstream of the transmembrane region in response to different signals to generate soluble forms. Cleaved by OMA1 at position S1 following stress conditions, generating the short soluble form (Dynamin-like GTPase OPA1, short form; S-OPA1). In terms of tissue distribution, strongly expressed in the brain, ovary and skeletal muscle. In the brain, expression of the mRNA was observed specifically in motor neurons, in nucleus oculomotorius, in nucleus valvulae lateralis, in the medulla oblongata and in the spinal cord.

It is found in the mitochondrion inner membrane. Its subcellular location is the mitochondrion intermembrane space. It catalyses the reaction GTP + H2O = GDP + phosphate + H(+). Functionally, dynamin-related GTPase that is essential for normal mitochondrial morphology by mediating fusion of the mitochondrial inner membranes, regulating cristae morphology and maintaining respiratory chain function. Exists in two forms: the transmembrane, long form (Dynamin-like GTPase OPA1, long form; L-OPA1), which is tethered to the inner mitochondrial membrane, and the short soluble form (Dynamin-like GTPase OPA1, short form; S-OPA1), which results from proteolytic cleavage and localizes in the intermembrane space. Both forms (L-OPA1 and S-OPA1) cooperate to catalyze the fusion of the mitochondrial inner membrane. The equilibrium between L-OPA1 and S-OPA1 is essential: excess levels of S-OPA1, produced by cleavage by OMA1 following loss of mitochondrial membrane potential, lead to an impaired equilibrium between L-OPA1 and S-OPA1, inhibiting mitochondrial fusion. The balance between L-OPA1 and S-OPA1 also influences cristae shape and morphology. Its role in mitochondrial morphology is required for mitochondrial genome maintenance. Its function is as follows. Constitutes the transmembrane long form (L-OPA1) that plays a central role in mitochondrial inner membrane fusion and cristae morphology. L-OPA1 and the soluble short form (S-OPA1) form higher-order helical assemblies that coordinate the fusion of mitochondrial inner membranes. Inner membrane-anchored L-OPA1 molecules initiate membrane remodeling by recruiting soluble S-OPA1 to rapidly polymerize into a flexible cylindrical scaffold encaging the mitochondrial inner membrane. Once at the membrane surface, the formation of S-OPA1 helices induce bilayer curvature. OPA1 dimerization through the paddle region, which inserts into cardiolipin-containing membrane, promotes GTP hydrolysis and the helical assembly of a flexible OPA1 lattice on the membrane, which drives membrane curvature and mitochondrial fusion. Plays a role in the maintenance and remodeling of mitochondrial cristae, some invaginations of the mitochondrial inner membrane that provide an increase in the surface area. Probably acts by forming helical filaments at the inside of inner membrane tubes with the shape and dimensions of crista junctions. Constitutes the soluble short form (S-OPA1) generated by cleavage by OMA1, which plays a central role in mitochondrial inner membrane fusion and cristae morphology. The transmembrane long form (L-OPA1) and the S-OPA1 form higher-order helical assemblies that coordinate the fusion of mitochondrial inner membranes. Inner membrane-anchored L-OPA1 molecules initiate membrane remodeling by recruiting soluble S-OPA1 to rapidly polymerize into a flexible cylindrical scaffold encaging the mitochondrial inner membrane. Once at the membrane surface, the formation of S-OPA1 helices induce bilayer curvature. OPA1 dimerization through the paddle region, which inserts into cardiolipin-containing membrane, promotes GTP hydrolysis and the helical assembly of a flexible OPA1 lattice on the membrane, which drives membrane curvature and mitochondrial fusion. Excess levels of S-OPA1 produced by cleavage by OMA1 following stress conditions that induce loss of mitochondrial membrane potential, lead to an impaired equilibrium between L-OPA1 and S-OPA1, thereby inhibiting mitochondrial fusion. Plays a role in the maintenance and remodeling of mitochondrial cristae, some invaginations of the mitochondrial inner membrane that provide an increase in the surface area. Probably acts by forming helical filaments at the inside of inner membrane tubes with the shape and dimensions of crista junctions. In Oncorhynchus masou (Cherry salmon), this protein is Dynamin-like GTPase OPA1, mitochondrial (opa1).